We begin with the raw amino-acid sequence, 699 residues long: MKIAVLFCFFLLIIFQTDFGKNEEIPRKQRRKIYHRRLRKSSTSHKHRSNRQLGIQQTTVFTPVARLPIVNFDYSMEEKFESFSSFPGVESSYNVLPGKKGHCLVKGITMYNKAVWSPEPCTTCLCSDGRVLCDETMCHPQRCPQTVIPEGECCPVCSATVSYSLLSGIALNDRNEFSGDSSEQREPTNLLHKQLPPPQVGMDRIVRKEALQSEEDEEVKEEDTEQKRETPESRNQGQLYSEGDSRGGDRKQRPGEERRLAHQQQRQGREEEEDEEEEGEEGEEDEEDEEDPVRGDMFRMPSRSPLPAPPRGTLRLPSGCSLSYRTISCINAMLTQIPPLTAPQITSLELTGNSIASIPDEAFNGLPNLERLDLSKNNITSSGIGPKAFKLLKKLMRLNMDGNNLIQIPSQLPSTLEELKVNENNLQAIDEESLSDLNQLVTLELEGNNLSEANVNPLAFKPLKSLAYLRLGKNKFRIIPQGLPGSIEELYLENNQIEEITEICFNHTRKINVIVLRYNKIEENRIAPLAWINQENLESIDLSYNKLYHVPSYLPKSLLHLVLLGNQIERIPGYVFGHMEPGLEYLYLSFNKLADDGMDRVSFYGAYHSLRELFLDHNDLKSIPPGIQEMKALHFLRLNNNKIRNILPEEICNAEEDDDSNLEHLHLENNYIKIREIPSYTFSCIRSYSSIVLKPQNIK.

The N-terminal stretch at 1–20 (MKIAVLFCFFLLIIFQTDFG) is a signal peptide. The 58-residue stretch at 101–158 (GHCLVKGITMYNKAVWSPEPCTTCLCSDGRVLCDETMCHPQRCPQTVIPEGECCPVCS) folds into the VWFC domain. Residues 176 to 186 (EFSGDSSEQRE) show a composition bias toward basic and acidic residues. The segment at 176–316 (EFSGDSSEQR…PAPPRGTLRL (141 aa)) is disordered. Over residues 212–224 (QSEEDEEVKEEDT) the composition is skewed to acidic residues. Basic and acidic residues predominate over residues 243 to 260 (GDSRGGDRKQRPGEERRL). Acidic residues predominate over residues 270–291 (EEEEDEEEEGEEGEEDEEDEED). The Cell attachment site motif lies at 294-296 (RGD). Residues 307 to 344 (PAPPRGTLRLPSGCSLSYRTISCINAMLTQIPPLTAPQ) enclose the LRRNT domain. LRR repeat units lie at residues 368–388 (NLERLDLSKNNITSSGIGPKA), 394–415 (KLMRLNMDGNNLIQIPSQLPST), 416–436 (LEELKVNENNLQAIDEESLSD), 439–459 (QLVTLELEGNNLSEANVNPLA), 465–484 (SLAYLRLGKNKFRIIPQGLP), 486–507 (SIEELYLENNQIEEITEICFNH), 510–530 (KINVIVLRYNKIEENRIAPLA), 536–557 (NLESIDLSYNKLYHVPSYLPKS), 558–578 (LLHLVLLGNQIERIPGYVFGH), 582–602 (GLEYLYLSFNKLADDGMDRVS), 609–630 (SLRELFLDHNDLKSIPPGIQEM), 632–653 (ALHFLRLNNNKIRNILPEEICN), and 661–684 (NLEHLHLENNYIKIREIPSYTFSC). The N-linked (GlcNAc...) asparagine glycan is linked to asparagine 378. The N-linked (GlcNAc...) asparagine glycan is linked to asparagine 449. Residue asparagine 506 is glycosylated (N-linked (GlcNAc...) asparagine).

The protein belongs to the small leucine-rich proteoglycan (SLRP) family. SLRP class I subfamily. As to quaternary structure, interacts with numerous extracellular matrix proteins. Interacts with MSL1 and RASSF1. Expressed predominantly in adipose tissue as well as female-specific organs such as mammary gland, ovary, and uterus.

It localises to the secreted. It is found in the extracellular space. Its subcellular location is the extracellular matrix. In terms of biological role, promotes matrix assembly and cell adhesiveness. This Homo sapiens (Human) protein is Extracellular matrix protein 2 (ECM2).